The primary structure comprises 300 residues: U1 small nuclear ribonucleoprotein 70 kDa homolog (300 aa).

An RRM domain is found at 107–198 (RTIFIGRLPY…RTVKYFKPRR (92 aa)). Disordered regions lie at residues 204–248 (GGRG…AYSA) and 263–300 (NRPLLSAATPTAAVTSVYKSRNSRTRESQPAPKEAPDY). Positions 265–279 (PLLSAATPTAAVTSV) are enriched in low complexity.

Component of the spliceosome, where it is associated with snRNP U1. Binds stem loop I of U1 snRNA. Interacts with mRNA.

The protein localises to the nucleus. Its function is as follows. Involved in nuclear mRNA splicing. The polypeptide is U1 small nuclear ribonucleoprotein 70 kDa homolog (SNP1) (Saccharomyces cerevisiae (strain ATCC 204508 / S288c) (Baker's yeast)).